The primary structure comprises 155 residues: UPF0260 protein Smed_0627 (155 aa).

It belongs to the UPF0260 family.

The polypeptide is UPF0260 protein Smed_0627 (Sinorhizobium medicae (strain WSM419) (Ensifer medicae)).